Here is a 253-residue protein sequence, read N- to C-terminus: Large ribosomal subunit protein uL1m (253 aa).

Residues 1 to 81 (MSSLIALGKR…SIALKSNRRA (81 aa)) constitute a mitochondrion transit peptide.

The protein belongs to the universal ribosomal protein uL1 family. Component of the mitochondrial large ribosomal subunit (mt-LSU). Mature yeast 74S mitochondrial ribosomes consist of a small (37S) and a large (54S) subunit. The 37S small subunit contains a 15S ribosomal RNA (15S mt-rRNA) and at least 32 different proteins. The 54S large subunit contains a 21S rRNA (21S mt-rRNA) and at least 45 different proteins.

Its subcellular location is the mitochondrion. Its function is as follows. Component of the mitochondrial ribosome (mitoribosome), a dedicated translation machinery responsible for the synthesis of mitochondrial genome-encoded proteins, including at least some of the essential transmembrane subunits of the mitochondrial respiratory chain. The mitoribosomes are attached to the mitochondrial inner membrane and translation products are cotranslationally integrated into the membrane. This is Large ribosomal subunit protein uL1m (mrpl1) from Schizosaccharomyces pombe (strain 972 / ATCC 24843) (Fission yeast).